We begin with the raw amino-acid sequence, 433 residues long: F-box only protein 15 (433 aa).

Positions 1–41 (MPSEILVKILSYLDAVTLVCIGCVSRRFYHLADDNLIWVRK) constitute an F-box domain.

In terms of assembly, directly interacts with SKP1 and CUL1. Expressed in testis.

Substrate-recognition component of the SCF (SKP1-CUL1-F-box protein)-type E3 ubiquitin ligase complex. This is F-box only protein 15 (Fbxo15) from Mus musculus (Mouse).